The chain runs to 82 residues: Conotoxin MiK42 (82 aa).

Residues 1–22 form the signal peptide; that stretch reads MKLTCALIVAMLLLTACQLITT. A propeptide spanning residues 23–49 is cleaved from the precursor; that stretch reads DDFRGRQQYRTARSRTKMQNYKIFRLT. Cystine bridges form between Cys52–Cys67, Cys59–Cys70, and Cys66–Cys80.

Belongs to the conotoxin O1 superfamily. In terms of tissue distribution, expressed by the venom duct.

The protein localises to the secreted. The polypeptide is Conotoxin MiK42 (Conus miles (Soldier cone)).